The chain runs to 1021 residues: Receptor-like protein EIX2 (1021 aa).

Positions 1 to 24 (MGKRTNPRHFLVTWSLLLLETAFG) are cleaved as a signal peptide. The segment at 25-109 (LTSREVNKTL…PILTGKVSPS (85 aa)) is N-cap. Topologically, residues 25 to 963 (LTSREVNKTL…DDDDEFSSLE (939 aa)) are extracellular. A glycan (N-linked (GlcNAc...) asparagine) is linked at Asn-31. LRR repeat units follow at residues 113–136 (LEYL…RFIG), 138–161 (LKRL…QFQN), 162–184 (LTSL…VWLS), 186–211 (LSSL…ITKV), 214–237 (LKEL…VANS), and 239–262 (LISL…SWLF). Asn-145 and Asn-161 each carry an N-linked (GlcNAc...) asparagine glycan. N-linked (GlcNAc...) asparagine glycosylation is present at Asn-236. The N-linked (GlcNAc...) asparagine glycan is linked to Asn-263. 14 LRR repeats span residues 265 to 288 (STSL…RFGS), 290 to 313 (MYLE…SFGN), 314 to 337 (LTRL…LFLR), 342 to 365 (RKSL…VTRF), 366 to 388 (SSLK…RVGQ), 389 to 412 (VSSL…LALF), 413 to 436 (PSLR…IGKL), 437 to 459 (SQLR…MGQL), 461 to 483 (NLER…HFSN), 484 to 507 (LSSL…DWVP), 509 to 532 (FQLQ…LQTQ), 533 to 555 (NNYT…WFSN), 557 to 581 (PPEL…IVSK), and 583 to 607 (DYMI…NIQI). An N-linked (GlcNAc...) asparagine glycan is attached at Asn-313. A glycan (N-linked (GlcNAc...) asparagine) is linked at Asn-483. N-linked (GlcNAc...) asparagine glycans are attached at residues Asn-534, Asn-544, Asn-564, and Asn-593. Residues 608-626 (FYLHKNHFSGSISSICRNT) form an LRR 21; degenerate repeat. LRR repeat units follow at residues 627 to 651 (IGAA…WMNM), 652 to 675 (SNLA…LGSL), 677 to 698 (NLEA…FSQC), 699 to 722 (QLLQ…IGTD), 723 to 747 (LLQL…ICQL), and 749 to 773 (FLQI…NFTI). N-linked (GlcNAc...) asparagine glycans are attached at residues Asn-650 and Asn-663. 2 N-linked (GlcNAc...) asparagine glycosylation sites follow: Asn-770 and Asn-778. LRR repeat units follow at residues 818–842 (LLYL…IAEM), 843–866 (RGLR…IGQM), 867–890 (KLLE…LSNL), and 892–913 (FLSV…STQL). Asn-849, Asn-856, and Asn-889 each carry an N-linked (GlcNAc...) asparagine glycan. The C-cap/acidic domain stretch occupies residues 914 to 963 (QSFDRSSYSGNAQLCGPPLEECPGYAPPIDRGSNTNPQEHDDDDEFSSLE). Residues 964–984 (FYVSMVLGFFVTFWGILGCLI) traverse the membrane as a helical segment. The Cytoplasmic portion of the chain corresponds to 985–1021 (VNRSWRNAYFTFLTDMKSWLHMTSRVCFARLKGKLRN).

This sequence belongs to the RLP family. As to quaternary structure, interacts with EIX elicitor protein.

Its subcellular location is the cell membrane. Involved in plant defense. Confers resistance to the fungal pathogen T.viride through recognition of the EIX elicitor protein. The sequence is that of Receptor-like protein EIX2 from Solanum lycopersicum (Tomato).